The primary structure comprises 175 residues: ATP synthase subunit b (175 aa).

The helical transmembrane segment at L24–W44 threads the bilayer.

The protein belongs to the ATPase B chain family. In terms of assembly, F-type ATPases have 2 components, F(1) - the catalytic core - and F(0) - the membrane proton channel. F(1) has five subunits: alpha(3), beta(3), gamma(1), delta(1), epsilon(1). F(0) has three main subunits: a(1), b(2) and c(10-14). The alpha and beta chains form an alternating ring which encloses part of the gamma chain. F(1) is attached to F(0) by a central stalk formed by the gamma and epsilon chains, while a peripheral stalk is formed by the delta and b chains.

It is found in the cell membrane. Functionally, f(1)F(0) ATP synthase produces ATP from ADP in the presence of a proton or sodium gradient. F-type ATPases consist of two structural domains, F(1) containing the extramembraneous catalytic core and F(0) containing the membrane proton channel, linked together by a central stalk and a peripheral stalk. During catalysis, ATP synthesis in the catalytic domain of F(1) is coupled via a rotary mechanism of the central stalk subunits to proton translocation. In terms of biological role, component of the F(0) channel, it forms part of the peripheral stalk, linking F(1) to F(0). The chain is ATP synthase subunit b from Acholeplasma laidlawii (strain PG-8A).